The primary structure comprises 462 residues: Nuclear factor interleukin-3-regulated protein (462 aa).

Lys24 is covalently cross-linked (Glycyl lysine isopeptide (Lys-Gly) (interchain with G-Cter in SUMO2)). Residues 73 to 136 form the bZIP domain; it reads DAMYWEKRRK…GLISSTAYAQ (64 aa). The segment at 79 to 95 is basic motif; the sequence is KRRKNNEAAKRSREKRR. Positions 99 to 106 are leucine-zipper; that stretch reads LVLENKLI. Disordered regions lie at residues 189–237 and 258–302; these read DVSE…DDRG and SPPL…IHSP. Residues 201–210 are compositionally biased toward polar residues; the sequence is ESSVQGSCRS. A Glycyl lysine isopeptide (Lys-Gly) (interchain with G-Cter in SUMO2) cross-link involves residue Lys214. Lys219 is covalently cross-linked (Glycyl lysine isopeptide (Lys-Gly) (interchain with G-Cter in SUMO1); alternate). Residue Lys219 forms a Glycyl lysine isopeptide (Lys-Gly) (interchain with G-Cter in SUMO2); alternate linkage. Positions 227 to 237 are enriched in basic and acidic residues; it reads SYTREPRDDRG. Residues 264–274 show a composition bias toward polar residues; sequence VNRSSSNSPRT. The necessary for transcriptional repression and sufficient for interaction with DR1 stretch occupies residues 299 to 363; that stretch reads IHSPVELKHV…PIDMTSKRHF (65 aa). Ser301 is modified (phosphoserine). Residues Lys306, Lys314, Lys326, Lys332, Lys337, and Lys350 each participate in a glycyl lysine isopeptide (Lys-Gly) (interchain with G-Cter in SUMO2) cross-link. A Phosphoserine modification is found at Ser353. Residues Lys360, Lys394, Lys401, Lys406, Lys412, Lys419, Lys424, Lys434, and Lys448 each participate in a glycyl lysine isopeptide (Lys-Gly) (interchain with G-Cter in SUMO2) cross-link.

This sequence belongs to the bZIP family. NFIL3 subfamily. Homodimer. Binds DNA as a dimer. Interacts with DR1. Interacts with PER2 and CRY2. Interacts with NR0B2. Interacts with MYSM1. Expressed in bladder stomach, thyroid, spinal cord, lymph node, trachea, adrenal gland, bone marrow and muscle.

The protein resides in the nucleus. Acts as a transcriptional regulator that recognizes and binds to the sequence 5'-[GA]TTA[CT]GTAA[CT]-3', a sequence present in many cellular and viral promoters. Represses transcription from promoters with activating transcription factor (ATF) sites. Represses promoter activity in osteoblasts. Represses transcriptional activity of PER1. Represses transcriptional activity of PER2 via the B-site on the promoter. Activates transcription from the interleukin-3 promoter in T-cells. Competes for the same consensus-binding site with PAR DNA-binding factors (DBP, HLF and TEF). Component of the circadian clock that acts as a negative regulator for the circadian expression of PER2 oscillation in the cell-autonomous core clock. Protects pro-B cells from programmed cell death. Represses the transcription of CYP2A5. Positively regulates the expression and activity of CES2 by antagonizing the repressive action of NR1D1 on CES2. Required for the development of natural killer cell precursors. In Homo sapiens (Human), this protein is Nuclear factor interleukin-3-regulated protein (NFIL3).